Here is a 730-residue protein sequence, read N- to C-terminus: Catalase-peroxidase (730 aa).

A cross-link (tryptophyl-tyrosyl-methioninium (Trp-Tyr) (with M-251)) is located at residues 92-225 (WHSAGTYRSI…LSAVHMGLIY (134 aa)). Catalysis depends on His-93, which acts as the Proton acceptor. The tryptophyl-tyrosyl-methioninium (Tyr-Met) (with W-92) cross-link spans 225-251 (YVNPEGPDGIPDPVASARDIRTTFRRM). His-266 provides a ligand contact to heme b.

Belongs to the peroxidase family. Peroxidase/catalase subfamily. In terms of assembly, homodimer or homotetramer. It depends on heme b as a cofactor. Formation of the three residue Trp-Tyr-Met cross-link is important for the catalase, but not the peroxidase activity of the enzyme.

The protein localises to the cytoplasm. It catalyses the reaction H2O2 + AH2 = A + 2 H2O. The catalysed reaction is 2 H2O2 = O2 + 2 H2O. Bifunctional enzyme with both catalase and broad-spectrum peroxidase activity. The sequence is that of Catalase-peroxidase from Blumeria hordei (Barley powdery mildew).